Here is a 1390-residue protein sequence, read N- to C-terminus: DNA-directed RNA polymerase subunit beta (1390 aa).

This sequence belongs to the RNA polymerase beta chain family. The RNAP catalytic core consists of 2 alpha, 1 beta, 1 beta' and 1 omega subunit. When a sigma factor is associated with the core the holoenzyme is formed, which can initiate transcription.

The enzyme catalyses RNA(n) + a ribonucleoside 5'-triphosphate = RNA(n+1) + diphosphate. DNA-dependent RNA polymerase catalyzes the transcription of DNA into RNA using the four ribonucleoside triphosphates as substrates. The protein is DNA-directed RNA polymerase subunit beta of Methylobacillus flagellatus (strain ATCC 51484 / DSM 6875 / VKM B-1610 / KT).